The following is a 64-amino-acid chain: Small ribosomal subunit protein bS21 (64 aa).

Belongs to the bacterial ribosomal protein bS21 family.

The protein is Small ribosomal subunit protein bS21 of Oenococcus oeni (strain ATCC BAA-331 / PSU-1).